The primary structure comprises 961 residues: Retinoblastoma-like protein homolog lin-35 (961 aa).

2 disordered regions span residues 1 to 43 (MPKR…PPAK) and 55 to 129 (GGVQ…TPPP). A compositionally biased stretch (polar residues) spans 68-81 (ELTQMTIKQETEGN). Residues 107–119 (GEDDDYEEDDADS) show a composition bias toward acidic residues. Ser714 carries the post-translational modification Phosphoserine; by CDK4. Thr719 is modified (phosphothreonine; by CDK4).

Belongs to the retinoblastoma protein (RB) family. Component of the DRM complex, at least composed of lin-9, lin-35, lin-37, lin-52, lin-53, lin-54, dpl-1 and efl-1. Interacts with lin-53. Interacts (via C-terminus) with dpl-1 (via C-terminus) and efl-1 (via C-terminus). Interacts (via C-terminus) with lin-8. Post-translationally, phosphorylated by the cyclin dependent kinase cdk-4. Phosphorylation inhibits the transcriptional repressor activity of lin-35 and allows for progression through the G1 phase of the cell cycle during postembryonic development.

The protein localises to the nucleus. Key regulator of cell division which acts as a transcriptional repressor and negatively regulates cell cycle progression in its active unphosphorylated form, but allows cell cycle progression when phosphorylated. When unphosphorylated and in its active form, interacts with E2F transcription factors such as efl-1 to repress their transcriptional activity and negatively regulate the progression through the G1 phase of the cell cycle during postembryonic development. May furthermore act with cell cycle regulator cki-1 to negatively regulate cell cycle progression. Acts redundantly with lin-53, fzr-1 and lin-23 to control cell cycle progression by regulating the expression of G1 phase cyclins. In particular, negatively regulates the expression of the cyclin E homolog cye-1, which is essential for the G1/S phase transition. Regulates cell division in the intestinal lineage, repressing the expression of genes such as cdc-25.2, which are required for intestinal cells to transition from the karyokinesis cell cycle (also known as nuclear division) to endoreplication, a specific growth pathway in the intestinal epithelium required for feeding and gut development in growing larvae during the L1 stage molt. Its role as a transcriptional repressor in the regulation of intestinal cell division during postembryonic development is most likely in complex with an E2F cell cycle regulatory transcription factor efl-1 and its binding partner the synthetic multivulva class B protein dpl-1. Synthetic multivulva (synMuv) class B protein. SynMuv proteins are required to repress the induction of vulval development by Ras signaling and probably act by forming the multiprotein DRM complex that represses transcription. Together with synMuv class B protein lin-53, and redundantly with synMuv class A protein lin-15A, represses transcription to control vulval development, most likely through antagonization of the Ras-signaling pathway in the major hypodermal syncytium hyp7. Acts redundantly with the transcriptional corepressor spr-1 and the zinc finger protein zfp-2 to play a role in vulval morphogenesis, promote germline proliferation and somatic gonad development. Acts redundantly with ubc-18 in the regulation of pharyngeal morphogenesis during embryonic development by negatively regulating the expression of proteins such as sup-35. Functions with the SWI/SNF complex and proteins such as pha-1 to regulate larval development. Functions redundantly with xnp-1 to regulate somatic gonad development. Acts redundantly with slr-2 to regulate the expression of intestinal genes required for nutrient utilization. Regulates transcription in response to starvation. Furthermore, in response to starvation, promotes germ cell programmed cell death by negatively regulating the expression of the anti-apoptotic protein ced-9. Conversely, in conjunction with mcd-1, efl-1 and the synthetic multivulva class B proteins dpl-1, lin-37 and lin-52, may also regulate transcription to promote programmed cell death independently of ced-1, ced-8 and ced-9 cell death pathways. Directly involved in heterochromatin formation by maintaining overall chromatin structure and, in particular, that of constitutive heterochromatin by stabilizing histone methylation. In particular, negatively regulates the expression of mes-4, a histone methyltransferase that controls the expression of germline specific genes. May play a role in double strand break formation during meiosis. May suppress sensitivity to RNAi. May play a role in the response to endoplasmic reticulum (ER) stress. In Caenorhabditis elegans, this protein is Retinoblastoma-like protein homolog lin-35.